We begin with the raw amino-acid sequence, 431 residues long: ATP-dependent protease ATPase subunit HslU (431 aa).

Residues Val18, 60 to 65 (GVGKTE), Asp244, Glu309, and Arg381 contribute to the ATP site.

It belongs to the ClpX chaperone family. HslU subfamily. In terms of assembly, a double ring-shaped homohexamer of HslV is capped on each side by a ring-shaped HslU homohexamer. The assembly of the HslU/HslV complex is dependent on binding of ATP.

It localises to the cytoplasm. ATPase subunit of a proteasome-like degradation complex; this subunit has chaperone activity. The binding of ATP and its subsequent hydrolysis by HslU are essential for unfolding of protein substrates subsequently hydrolyzed by HslV. HslU recognizes the N-terminal part of its protein substrates and unfolds these before they are guided to HslV for hydrolysis. The polypeptide is ATP-dependent protease ATPase subunit HslU (Caulobacter sp. (strain K31)).